Consider the following 458-residue polypeptide: Argininosuccinate lyase (458 aa).

Belongs to the lyase 1 family. Argininosuccinate lyase subfamily.

The protein resides in the cytoplasm. It catalyses the reaction 2-(N(omega)-L-arginino)succinate = fumarate + L-arginine. Its pathway is amino-acid biosynthesis; L-arginine biosynthesis; L-arginine from L-ornithine and carbamoyl phosphate: step 3/3. This is Argininosuccinate lyase from Haemophilus ducreyi (strain 35000HP / ATCC 700724).